Consider the following 154-residue polypeptide: Transcriptional repressor NrdR (154 aa).

A zinc finger lies at 3-34 (CPFCRHPDSRVIDSRETDEGQAIRRRRSCPEC). The ATP-cone domain occupies 46-136 (LAVVKRSGVT…VYRSFSSADD (91 aa)).

This sequence belongs to the NrdR family. Zn(2+) serves as cofactor.

In terms of biological role, negatively regulates transcription of bacterial ribonucleotide reductase nrd genes and operons by binding to NrdR-boxes. The sequence is that of Transcriptional repressor NrdR from Mycobacterium bovis (strain ATCC BAA-935 / AF2122/97).